Here is a 368-residue protein sequence, read N- to C-terminus: MPNAIVAAEQYREIFLNQHPIMDVRAPIEFTRGAFPNSTNLPLMLDSEREKVGTCYKQSGQQAAIALGHSLVNGPIKQQRIEAWASYVKANPNAYLYCFRGGLRSQLSQQWLKEAGVEVPYIQGGYKAMRQYLIGVIEAAPAQQPLLSLSGMTGCGKTDFLLQRKEAVDLEGIANHRGSSFGKNIDPQSTQINFENQLAIALLQHQTSDAACLLLEDESFLIGRSALPQTFYNAMQAANVLVLEESDDARLERLRNEYVHKMYSGFCERLGPEAGFAAFSDYLLQSLVSIRKRLGGKQHQELQDLMQQALDQQINQNDTSLHLVWINLLLHKYYDPMYLYQLENKSERVLFKGSHQAMHEWLDSYQTR.

The Rhodanese domain maps to 15-138 (FLNQHPIMDV…MRQYLIGVIE (124 aa)). The S-selanylcysteine intermediate role is filled by cysteine 98.

The protein belongs to the SelU family. Monomer.

It catalyses the reaction 5-methylaminomethyl-2-thiouridine(34) in tRNA + selenophosphate + (2E)-geranyl diphosphate + H2O + H(+) = 5-methylaminomethyl-2-selenouridine(34) in tRNA + (2E)-thiogeraniol + phosphate + diphosphate. The catalysed reaction is 5-methylaminomethyl-2-thiouridine(34) in tRNA + (2E)-geranyl diphosphate = 5-methylaminomethyl-S-(2E)-geranyl-thiouridine(34) in tRNA + diphosphate. The enzyme catalyses 5-methylaminomethyl-S-(2E)-geranyl-thiouridine(34) in tRNA + selenophosphate + H(+) = 5-methylaminomethyl-2-(Se-phospho)selenouridine(34) in tRNA + (2E)-thiogeraniol. It carries out the reaction 5-methylaminomethyl-2-(Se-phospho)selenouridine(34) in tRNA + H2O = 5-methylaminomethyl-2-selenouridine(34) in tRNA + phosphate. Involved in the post-transcriptional modification of the uridine at the wobble position (U34) of tRNA(Lys), tRNA(Glu) and tRNA(Gln). Catalyzes the conversion of 2-thiouridine (S2U-RNA) to 2-selenouridine (Se2U-RNA). Acts in a two-step process involving geranylation of 2-thiouridine (S2U) to S-geranyl-2-thiouridine (geS2U) and subsequent selenation of the latter derivative to 2-selenouridine (Se2U) in the tRNA chain. This chain is tRNA 2-selenouridine synthase, found in Shewanella baltica (strain OS155 / ATCC BAA-1091).